Consider the following 161-residue polypeptide: Phosphopantetheine adenylyltransferase (161 aa).

Position 10 (serine 10) interacts with substrate. Residues 10–11 and histidine 18 contribute to the ATP site; that span reads SF. Residues lysine 42, alanine 75, and arginine 89 each contribute to the substrate site. Residues 90 to 92, glutamate 100, and 125 to 131 contribute to the ATP site; these read GLR and LSPISSS.

This sequence belongs to the bacterial CoaD family. As to quaternary structure, homohexamer. Requires Mg(2+) as cofactor.

It is found in the cytoplasm. It catalyses the reaction (R)-4'-phosphopantetheine + ATP + H(+) = 3'-dephospho-CoA + diphosphate. It participates in cofactor biosynthesis; coenzyme A biosynthesis; CoA from (R)-pantothenate: step 4/5. In terms of biological role, reversibly transfers an adenylyl group from ATP to 4'-phosphopantetheine, yielding dephospho-CoA (dPCoA) and pyrophosphate. The chain is Phosphopantetheine adenylyltransferase from Streptococcus agalactiae serotype III (strain NEM316).